The sequence spans 314 residues: Pantothenate synthetase (314 aa).

An ATP-binding site is contributed by 43–50; that stretch reads MGALHEGH. The Proton donor role is filled by His-50. Residue Gln-75 participates in (R)-pantoate binding. Gln-75 is a beta-alanine binding site. Residues 112–131 form a disordered region; it reads MYPDGTRTSVHPGPLGDDLE. Residue 161–164 participates in ATP binding; the sequence is GEKD. Residue Gln-167 participates in (R)-pantoate binding. ATP-binding positions include Val-190 and 198 to 201; that span reads LSSR.

Belongs to the pantothenate synthetase family. In terms of assembly, homodimer.

Its subcellular location is the cytoplasm. It catalyses the reaction (R)-pantoate + beta-alanine + ATP = (R)-pantothenate + AMP + diphosphate + H(+). Its pathway is cofactor biosynthesis; (R)-pantothenate biosynthesis; (R)-pantothenate from (R)-pantoate and beta-alanine: step 1/1. In terms of biological role, catalyzes the condensation of pantoate with beta-alanine in an ATP-dependent reaction via a pantoyl-adenylate intermediate. The chain is Pantothenate synthetase from Mycolicibacterium smegmatis (strain ATCC 700084 / mc(2)155) (Mycobacterium smegmatis).